The following is a 429-amino-acid chain: Putative GMP synthase [glutamine-hydrolyzing] (429 aa).

The Glutamine amidotransferase type-1 domain occupies 10–118 (TIFILDFGSQ…GYTPIHLYPC (109 aa)). Cys-87 acts as the Nucleophile in catalysis. Residues 119 to 304 (ELFKHIVDCE…LGLSSYLLDR (186 aa)) form the GMPS ATP-PPase domain. Residues His-176 and Glu-178 contribute to the active site.

As to quaternary structure, homodimer.

It catalyses the reaction XMP + L-glutamine + ATP + H2O = GMP + L-glutamate + AMP + diphosphate + 2 H(+). Its pathway is purine metabolism; GMP biosynthesis; GMP from XMP (L-Gln route): step 1/1. Catalyzes the synthesis of GMP from XMP. In Chlamydia pneumoniae (Chlamydophila pneumoniae), this protein is Putative GMP synthase [glutamine-hydrolyzing] (guaA).